The primary structure comprises 284 residues: 2-dehydro-3-deoxyphosphooctonate aldolase (284 aa).

Belongs to the KdsA family.

Its subcellular location is the cytoplasm. The enzyme catalyses D-arabinose 5-phosphate + phosphoenolpyruvate + H2O = 3-deoxy-alpha-D-manno-2-octulosonate-8-phosphate + phosphate. The protein operates within carbohydrate biosynthesis; 3-deoxy-D-manno-octulosonate biosynthesis; 3-deoxy-D-manno-octulosonate from D-ribulose 5-phosphate: step 2/3. It functions in the pathway bacterial outer membrane biogenesis; lipopolysaccharide biosynthesis. This is 2-dehydro-3-deoxyphosphooctonate aldolase from Paraburkholderia xenovorans (strain LB400).